Reading from the N-terminus, the 187-residue chain is UPF0215 protein PAE0952 (187 aa).

This sequence belongs to the UPF0215 family.

The polypeptide is UPF0215 protein PAE0952 (Pyrobaculum aerophilum (strain ATCC 51768 / DSM 7523 / JCM 9630 / CIP 104966 / NBRC 100827 / IM2)).